Consider the following 1100-residue polypeptide: Regulator of nonsense transcripts 1 (1100 aa).

A compositionally biased stretch (low complexity) spans 42–53; the sequence is SQTQTQGQTQSQ. The tract at residues 42 to 67 is disordered; it reads SQTQTQGQTQSQLDNQVNGPDGVLPN. In terms of domain architecture, Upf1 CH-rich spans 94–251; it reads TKDLPVHACS…NKLEELWKEN (158 aa). C102, C105, C116, S119, C124, H134, H138, C144, C162, C165, C188, and C192 together coordinate Zn(2+). The tract at residues 102 to 134 is C3H; the sequence is CSYCGIHDPACVVYCNTSKKWFCNGRGNTSGSH. Positions 116–144 are CC/SHH/C; that stretch reads CNTSKKWFCNGRGNTSGSHIVNHLVRAKC. The interval 162 to 192 is C4; sequence CYNCGCRNVFLLGFIPAKADSVVVLLCRQPC. Residues Q455, 475–479, Q645, Y682, and E813 each bind ATP; that span reads GTGKT. The interval 978 to 1065 is disordered; the sequence is LGQVNGPAAG…QPELSQDSYL (88 aa). The segment covering 982-993 has biased composition (low complexity); sequence NGPAAGRGAPKG. Polar residues predominate over residues 1012-1063; sequence SGQPNMPNSQASQDLVSQPFSQGPLTQGYITMSQPSQMSQPGLSQPELSQDS.

It belongs to the DNA2/NAM7 helicase family.

Its subcellular location is the cytoplasm. It localises to the P-body. It is found in the nucleus. The protein localises to the perinuclear region. Its function is as follows. RNA-dependent helicase and ATPase required for nonsense-mediated decay (NMD) of mRNAs containing premature stop codons. Is recruited to mRNAs upon translation termination and undergoes a cycle of phosphorylation and dephosphorylation; its phosphorylation appears to be a key step in NMD. The formation of an upf1-upf2-upf3 surveillance complex is believed to activate NMD. This chain is Regulator of nonsense transcripts 1, found in Danio rerio (Zebrafish).